Here is a 445-residue protein sequence, read N- to C-terminus: MKPVIALVGRPNVGKSTLFNRLTRSRDALVADLPGLTRDRHYGEGRVGERPYLVVDTGGFEPVAKDGILHEMARQTRQAVEEADVVVFIVDGRNGLAPQDKSIADYLRKTGRPIFLVVNKAEGMKYTAVATDFYELGLGDPRAISAAHGDGVTDMINEALEVAYAGQPEEAEEDDPSRGIKIAIVGRPNVGKSTLVNALIGEDRVIAFDMPGTTRDSIYVDFERNGKKYTLIDTAGLRRRGKVFEAIEKFSVVKTLQSISDANVVILLLDAQQDISDQDAHIAGFVVEQGRALVIGVNKWDGFDDHARDRAKADLTRKLKFLDFAKSHFISAAKKTGIGALMRSVDDAYAAAMSKLPTPKLTRALIEAVEFQQPRRRGPVRPKLRYAHQGGQNPPIIVIHGNALDAVTETYKRYLENRFRETFSLTGTPLRIEFRSSNNPYADKG.

EngA-type G domains are found at residues 3–167 (PVIA…YAGQ) and 180–353 (IKIA…AAAM). Residues 9–16 (GRPNVGKS), 56–60 (DTGGF), 119–122 (NKAE), 186–193 (GRPNVGKS), 233–237 (DTAGL), and 298–301 (NKWD) contribute to the GTP site. One can recognise a KH-like domain in the interval 354 to 438 (SKLPTPKLTR…PLRIEFRSSN (85 aa)).

The protein belongs to the TRAFAC class TrmE-Era-EngA-EngB-Septin-like GTPase superfamily. EngA (Der) GTPase family. In terms of assembly, associates with the 50S ribosomal subunit.

GTPase that plays an essential role in the late steps of ribosome biogenesis. The polypeptide is GTPase Der (Burkholderia cenocepacia (strain ATCC BAA-245 / DSM 16553 / LMG 16656 / NCTC 13227 / J2315 / CF5610) (Burkholderia cepacia (strain J2315))).